Here is a 158-residue protein sequence, read N- to C-terminus: Kalata-B3/B6 (158 aa).

The signal sequence occupies residues 1–22; the sequence is MAKFTKSLVLCLLLAAFVGAFG. Residues 23 to 66 constitute a propeptide that is removed on maturation; the sequence is AELSEADKANVVNEIAANIQREILKGVKSSETTLTMFLKEMQLK. The cyclopeptide (Gly-Asn) cross-link spans 67 to 96; the sequence is GLPTCGETCFGGTCNTPGCSCSSWPICTRN. 3 disulfides stabilise this stretch: Cys-71–Cys-85, Cys-75–Cys-87, and Cys-80–Cys-93. The propeptide occupies 97–121; sequence GLPKRAGVKSSETTLTMFLKEMQLK. The cyclopeptide (Gly-Asp) cross-link spans 122 to 151; sequence GLPTCGETCFGGTCNTPGCTCDPWPICTRD. Cystine bridges form between Cys-126–Cys-140, Cys-130–Cys-142, and Cys-135–Cys-148. A propeptide spanning residues 152–158 is cleaved from the precursor; it reads GLPSAAA.

This sequence belongs to the cyclotide family. Moebius subfamily. Post-translationally, kalata-B3 and kalata-B6 are cyclic peptides.

Probably participates in a plant defense mechanism. Has hemolytic activity. The sequence is that of Kalata-B3/B6 (OAK2) from Oldenlandia affinis.